The chain runs to 326 residues: Acyl-CoA-binding domain-containing protein 4 (326 aa).

The ACB domain maps to 10 to 99; the sequence is CQKQFQAAVS…MKLVAQKVID (90 aa). Residues 21–30, 41–45, Lys-67, and Tyr-86 each bind an acyl-CoA; these read IQNLPKNGSY and YSYYK. Disordered regions lie at residues 147–170 and 223–248; these read VQAA…SRLP and KEAA…SLMG. Ser-164 bears the Phosphoserine mark.

In terms of biological role, binds medium- and long-chain acyl-CoA esters and may function as an intracellular carrier of acyl-CoA esters. The sequence is that of Acyl-CoA-binding domain-containing protein 4 (Acbd4) from Rattus norvegicus (Rat).